A 596-amino-acid polypeptide reads, in one-letter code: Elongation factor 4 (596 aa).

A tr-type G domain is found at 2–183; that stretch reads KNIRNFSIIA…TIITKIPAPK (182 aa). Residues 14-19 and 130-133 each bind GTP; these read DHGKST and NKID.

This sequence belongs to the TRAFAC class translation factor GTPase superfamily. Classic translation factor GTPase family. LepA subfamily.

The protein localises to the cell inner membrane. The enzyme catalyses GTP + H2O = GDP + phosphate + H(+). Required for accurate and efficient protein synthesis under certain stress conditions. May act as a fidelity factor of the translation reaction, by catalyzing a one-codon backward translocation of tRNAs on improperly translocated ribosomes. Back-translocation proceeds from a post-translocation (POST) complex to a pre-translocation (PRE) complex, thus giving elongation factor G a second chance to translocate the tRNAs correctly. Binds to ribosomes in a GTP-dependent manner. The protein is Elongation factor 4 of Campylobacter lari (strain RM2100 / D67 / ATCC BAA-1060).